We begin with the raw amino-acid sequence, 1248 residues long: Bifunctional autolysin (1248 aa).

The N-terminal stretch at 1-29 is a signal peptide; the sequence is MAKKFNYKLPSMVALTLVGSAVTAHQVQA. A disordered region spans residues 103–134; sequence GDTRANQSATTNNTQPVAKSTSTTAPKTNTNV. The tract at residues 191-767 is N-acetylmuramoyl-L-alanine amidase; it reads ASAQPRSVAA…AVAQPKTAVK (577 aa). 7 consecutive GW domains span residues 435-509, 511-585, 604-678, 680-754, 776-851, 853-928, and 935-1009; these read TVAA…YNTA, SPVN…DTAK, TVSS…YNNA, SPVN…VPAA, TTQT…VQNL, KEVK…APTA, and AAKD…KELI. Residues 768–1248 are endo-beta-N-acetylglucosaminidase; it reads AYTVTKPQTT…GKYFDIPQYK (481 aa).

This sequence in the N-terminal section; belongs to the N-acetylmuramoyl-L-alanine amidase 2 family. The protein in the C-terminal section; belongs to the glycosyl hydrolase 73 family. Oligomer; forms a ring structure at the cell surface which is important for efficient partitioning of daughter cells after cell division. Post-translationally, undergoes proteolytic processing to generate the two extracellular lytic enzymes, probably at the septal region on the cell surface.

It localises to the secreted. The enzyme catalyses Hydrolyzes the link between N-acetylmuramoyl residues and L-amino acid residues in certain cell-wall glycopeptides.. It carries out the reaction an N(4)-(oligosaccharide-(1-&gt;3)-[oligosaccharide-(1-&gt;6)]-beta-D-Man-(1-&gt;4)-beta-D-GlcNAc-(1-&gt;4)-alpha-D-GlcNAc)-L-asparaginyl-[protein] + H2O = an oligosaccharide-(1-&gt;3)-[oligosaccharide-(1-&gt;6)]-beta-D-Man-(1-&gt;4)-D-GlcNAc + N(4)-(N-acetyl-beta-D-glucosaminyl)-L-asparaginyl-[protein]. Endohydrolysis of the di-N-acetylchitobiosyl unit in high-mannose glycopeptides and glycoproteins containing the -[(Man)5(GlcNAc)2]-Asn structure. One N-acetyl-D-glucosamine residue remains attached to the protein; the rest of the oligosaccharide is released intact. Cleaves the peptidoglycan connecting the daughter cells at the end of the cell division cycle, resulting in the separation of the two newly divided cells. Acts as an autolysin in penicillin-induced lysis. The protein is Bifunctional autolysin (atl) of Staphylococcus aureus (strain Mu50 / ATCC 700699).